A 177-amino-acid polypeptide reads, in one-letter code: dCTP deaminase (177 aa).

Residues 100-105 and aspartate 116 each bind dCTP; that span reads RSSIAR. Glutamate 126 serves as the catalytic Proton donor/acceptor. DCTP is bound by residues tyrosine 159 and glutamine 166.

It belongs to the dCTP deaminase family. Homotrimer.

It catalyses the reaction dCTP + H2O + H(+) = dUTP + NH4(+). The protein operates within pyrimidine metabolism; dUMP biosynthesis; dUMP from dCTP (dUTP route): step 1/2. Its function is as follows. Catalyzes the deamination of dCTP to dUTP. In Korarchaeum cryptofilum (strain OPF8), this protein is dCTP deaminase.